Here is a 1909-residue protein sequence, read N- to C-terminus: Nck-associated protein 5 (1909 aa).

A coiled-coil region spans residues 71–253; the sequence is EKLIHELEEE…DLEQQNRTLS (183 aa). Disordered regions lie at residues 351 to 370, 736 to 819, 855 to 997, 1026 to 1469, 1486 to 1509, 1541 to 1592, 1725 to 1750, and 1763 to 1885; these read SSYTWHDGKNLRKRQSSQNW, EEDT…LMEP, PLFE…KKPS, SSSF…APLS, KGQVQTKPTSVEAKQKPGPSFASW, GFGN…RTPQ, FPLPDSGNRSTGRYLCQPDSPEDAEP, and SMRA…DYGD. Positions 736-748 are enriched in basic and acidic residues; sequence EEDTEKNIPKDNV. Polar residues-rich tracts occupy residues 753 to 789, 950 to 965, 981 to 990, and 1066 to 1084; these read RVSTESFSSRTVTQNPQQQKLVKPTHNISCQSNSRSS, APSSTKSETRVPSETA, VISSNPATTE, and PRISPSTHEPLEMTSSKSV. Low complexity-rich tracts occupy residues 1110 to 1131 and 1178 to 1187; these read SPSSQVSSSSSSSSPAKSHNSP and ASKSSVAVNK. The span at 1241-1250 shows a compositional bias: basic and acidic residues; sequence DGRDGVDNRS. Positions 1300 to 1325 are enriched in polar residues; that stretch reads QIITNTAERGNSLTRQNSSTESSPNK. Low complexity predominate over residues 1339 to 1366; it reads GRPSGHPSSGKGSLGSSGSFSSQHGSPS. A compositionally biased stretch (polar residues) spans 1428–1446; it reads PGRTQHPSTFETSSTSKLE. Residues 1454-1466 are compositionally biased toward low complexity; that stretch reads ASATATDAVSSEA. 2 stretches are compositionally biased toward basic and acidic residues: residues 1547-1560 and 1567-1576; these read LKSERKKEKKKPEL and ELIKDTKSAD. A compositionally biased stretch (polar residues) spans 1869 to 1878; sequence YSASGGSNSD.

As to quaternary structure, interacts with the SH3-containing region of the adapter protein NCK. As to expression, expressed in fetal and adult brain, leukocytes and fetal fibroblasts.

The polypeptide is Nck-associated protein 5 (NCKAP5) (Homo sapiens (Human)).